Reading from the N-terminus, the 222-residue chain is Countin-3 (222 aa).

The signal sequence occupies residues 1 to 20 (MNKILSLFLITILLISKVMS). One can recognise a Saposin B-type domain in the interval 21-105 (SSEECKLCTD…ESVKMCQYND (85 aa)). 3 disulfides stabilise this stretch: Cys25/Cys101, Cys28/Cys95, and Cys56/Cys68. 3 N-linked (GlcNAc...) asparagine glycosylation sites follow: Asn108, Asn134, and Asn218.

The protein belongs to the countin family.

Its subcellular location is the secreted. Its function is as follows. May control the size of the multicellular structure. In Dictyostelium discoideum (Social amoeba), this protein is Countin-3 (ctnC).